Consider the following 160-residue polypeptide: Large ribosomal subunit protein bL17 (160 aa).

Positions D123–Q141 are enriched in basic and acidic residues. The disordered stretch occupies residues D123 to E160. The segment covering K142–G152 has biased composition (low complexity).

Belongs to the bacterial ribosomal protein bL17 family. In terms of assembly, part of the 50S ribosomal subunit. Contacts protein L32.

This Acidobacterium capsulatum (strain ATCC 51196 / DSM 11244 / BCRC 80197 / JCM 7670 / NBRC 15755 / NCIMB 13165 / 161) protein is Large ribosomal subunit protein bL17.